The primary structure comprises 664 residues: Protein SIEVE ELEMENT OCCLUSION C (664 aa).

The polypeptide is Protein SIEVE ELEMENT OCCLUSION C (Arabidopsis thaliana (Mouse-ear cress)).